Here is a 457-residue protein sequence, read N- to C-terminus: Glutamate--tRNA ligase 2 (457 aa).

The 'HIGH' region motif lies at 8–18 (PSPTGYIHIGN). The 'KMSKS' region motif lies at 249–253 (GFSKR). Residue lysine 252 participates in ATP binding.

Belongs to the class-I aminoacyl-tRNA synthetase family. Glutamate--tRNA ligase type 1 subfamily. In terms of assembly, monomer.

It localises to the cytoplasm. It carries out the reaction tRNA(Glu) + L-glutamate + ATP = L-glutamyl-tRNA(Glu) + AMP + diphosphate. Its function is as follows. Catalyzes the attachment of glutamate to tRNA(Glu) in a two-step reaction: glutamate is first activated by ATP to form Glu-AMP and then transferred to the acceptor end of tRNA(Glu). This is Glutamate--tRNA ligase 2 from Bartonella tribocorum (strain CIP 105476 / IBS 506).